A 72-amino-acid chain; its full sequence is Cell division protein ZapB (72 aa).

The stretch at 5–71 (ILDQLEEKIK…LRSLLGQIDN (67 aa)) forms a coiled coil.

The protein belongs to the ZapB family. As to quaternary structure, homodimer. The ends of the coiled-coil dimer bind to each other, forming polymers. Interacts with FtsZ.

The protein resides in the cytoplasm. Non-essential, abundant cell division factor that is required for proper Z-ring formation. It is recruited early to the divisome by direct interaction with FtsZ, stimulating Z-ring assembly and thereby promoting cell division earlier in the cell cycle. Its recruitment to the Z-ring requires functional FtsA or ZipA. The polypeptide is Cell division protein ZapB (Actinobacillus pleuropneumoniae serotype 5b (strain L20)).